Here is a 438-residue protein sequence, read N- to C-terminus: Serine hydroxymethyltransferase 1 (438 aa).

Residues L130 and G134–L136 contribute to the (6S)-5,6,7,8-tetrahydrofolate site. An N6-(pyridoxal phosphate)lysine modification is found at K239.

Belongs to the SHMT family. In terms of assembly, homodimer. Pyridoxal 5'-phosphate serves as cofactor.

The protein localises to the cytoplasm. It catalyses the reaction (6R)-5,10-methylene-5,6,7,8-tetrahydrofolate + glycine + H2O = (6S)-5,6,7,8-tetrahydrofolate + L-serine. Its pathway is one-carbon metabolism; tetrahydrofolate interconversion. It participates in amino-acid biosynthesis; glycine biosynthesis; glycine from L-serine: step 1/1. Its function is as follows. Catalyzes the reversible interconversion of serine and glycine with tetrahydrofolate (THF) serving as the one-carbon carrier. This reaction serves as the major source of one-carbon groups required for the biosynthesis of purines, thymidylate, methionine, and other important biomolecules. Also exhibits THF-independent aldolase activity toward beta-hydroxyamino acids, producing glycine and aldehydes, via a retro-aldol mechanism. The polypeptide is Serine hydroxymethyltransferase 1 (Mycobacterium tuberculosis (strain CDC 1551 / Oshkosh)).